The following is a 131-amino-acid chain: Large ribosomal subunit protein bL12c (131 aa).

The disordered stretch occupies residues 107-131; it reads QGVSKDDAEASKKQLEDAGAKVKIS. Over residues 110 to 131 the composition is skewed to basic and acidic residues; sequence SKDDAEASKKQLEDAGAKVKIS.

This sequence belongs to the bacterial ribosomal protein bL12 family. Homodimer. Part of the ribosomal stalk of the 50S ribosomal subunit. Forms a multimeric L10(L12)X complex, where L10 forms an elongated spine to which 2 to 4 L12 dimers bind in a sequential fashion. Binds GTP-bound translation factors.

It is found in the plastid. Its subcellular location is the chloroplast. Its function is as follows. Forms part of the ribosomal stalk which helps the ribosome interact with GTP-bound translation factors. Is thus essential for accurate translation. The chain is Large ribosomal subunit protein bL12c from Chlorella vulgaris (Green alga).